The sequence spans 337 residues: Gastrula zinc finger protein XlCGF26.1 (337 aa).

C2H2-type zinc fingers lie at residues Phe6–His28, Phe34–His56, Phe62–His84, Phe90–His112, Phe118–His140, Phe146–His168, Phe174–His196, Phe202–His224, Phe230–His252, Phe258–His280, Phe286–His309, and Phe315–His337.

It belongs to the krueppel C2H2-type zinc-finger protein family.

The protein resides in the nucleus. Its function is as follows. May be involved in transcriptional regulation. In Xenopus laevis (African clawed frog), this protein is Gastrula zinc finger protein XlCGF26.1.